We begin with the raw amino-acid sequence, 649 residues long: Ubiquitin-associated and SH3 domain-containing protein B (649 aa).

At serine 20 the chain carries Phosphoserine. Residue threonine 23 is modified to Phosphothreonine. Residues 27–76 (NRQQRPGTIKHGSALDVLLSMGFPRARAQKALASTGGRSVQAACDWLFSH) enclose the UBA domain. An SH3 domain is found at 254 to 319 (ANHETLQVIY…PENYITKADE (66 aa)). Residues 380 to 649 (GPQKRCLFVC…FNWRETLLQE (270 aa)) form a protein tyrosine phosphatase region. Residue arginine 390 is part of the active site. Histidine 391 serves as the catalytic Tele-phosphohistidine intermediate. Histidine 576 is a catalytic residue.

As to quaternary structure, homodimer. Interacts with JAK2 (in vitro). Interacts with CBL. Part of a complex containing CBL and activated EGFR. Interacts with ubiquitin and with mono-ubiquitinated proteins. Interacts with ZAP70 (ubiquitinated form).

Its subcellular location is the cytoplasm. The protein resides in the nucleus. The enzyme catalyses O-phospho-L-tyrosyl-[protein] + H2O = L-tyrosyl-[protein] + phosphate. In terms of biological role, interferes with CBL-mediated down-regulation and degradation of receptor-type tyrosine kinases. Promotes accumulation of activated target receptors, such as T-cell receptors and EGFR, on the cell surface. Exhibits tyrosine phosphatase activity toward several substrates including EGFR, FAK, SYK, and ZAP70. Down-regulates proteins that are dually modified by both protein tyrosine phosphorylation and ubiquitination. The polypeptide is Ubiquitin-associated and SH3 domain-containing protein B (UBASH3B) (Homo sapiens (Human)).